The primary structure comprises 376 residues: S-adenosylmethionine synthase (376 aa).

An ATP-binding site is contributed by histidine 15. Aspartate 17 is a Mg(2+) binding site. Residue glutamate 43 participates in K(+) binding. L-methionine-binding residues include glutamate 56 and glutamine 92. The tract at residues 92-102 (QSKEIANQVDR) is flexible loop. ATP is bound by residues 156–158 (DMK), aspartate 231, 237–238 (RK), alanine 254, and lysine 258. Aspartate 231 lines the L-methionine pocket. Lysine 262 is an L-methionine binding site.

Belongs to the AdoMet synthase family. In terms of assembly, homotetramer; dimer of dimers. Mg(2+) serves as cofactor. The cofactor is K(+).

Its subcellular location is the cytoplasm. It catalyses the reaction L-methionine + ATP + H2O = S-adenosyl-L-methionine + phosphate + diphosphate. It functions in the pathway amino-acid biosynthesis; S-adenosyl-L-methionine biosynthesis; S-adenosyl-L-methionine from L-methionine: step 1/1. Its function is as follows. Catalyzes the formation of S-adenosylmethionine (AdoMet) from methionine and ATP. The overall synthetic reaction is composed of two sequential steps, AdoMet formation and the subsequent tripolyphosphate hydrolysis which occurs prior to release of AdoMet from the enzyme. The polypeptide is S-adenosylmethionine synthase (Mycoplasmopsis pulmonis (strain UAB CTIP) (Mycoplasma pulmonis)).